The following is a 280-amino-acid chain: MSQEIRQNEKISYRIEGPFFIIHLMNPDNLNALEGEDYIYLGELLELADRNRDVYFTIIQSSGRFFSSGADFKGIAKAQGDDTNKYPSETSKWVSNFVARNVYVTDAFIKHSKVLICCLNGPAIGLSAALVALCDIVYSINDKVYLLYPFANLGLITEGGTTVSLPLKFGTNTTYECLMFNKPFKYDIMCENGFISKNFNMPSSNAEAFNAKVLEELREKVKGLYLPSCLGMKKLLKSNHIDAFNKANSVEVNESLKYWVDGEPLKRFRQLGSKQRKHRL.

Substrate contacts are provided by residues 68–72 and Leu126; that span reads SGADF. Catalysis depends on Glu158, which acts as the Proton donor/acceptor. The Microbody targeting signal motif lies at 278–280; the sequence is HRL.

This sequence belongs to the enoyl-CoA hydratase/isomerase family. In terms of assembly, homohexamer, dimer of trimers. Interacts with DCI1.

Its subcellular location is the peroxisome. It carries out the reaction a (3Z)-enoyl-CoA = a 4-saturated (2E)-enoyl-CoA. The catalysed reaction is a (3E)-enoyl-CoA = a 4-saturated (2E)-enoyl-CoA. Its pathway is lipid metabolism; fatty acid beta-oxidation. Functionally, essential for the beta oxidation of unsaturated fatty acids. The polypeptide is 3,2-trans-enoyl-CoA isomerase (ECI1) (Saccharomyces cerevisiae (strain ATCC 204508 / S288c) (Baker's yeast)).